Consider the following 597-residue polypeptide: NADPH-dependent diflavin oxidoreductase 1 (597 aa).

The 145-residue stretch at 6–150 (LLVLFGSQTG…AVDPWLRDLW (145 aa)) folds into the Flavodoxin-like domain. FMN is bound by residues 12-17 (SQTGTA), 59-62 (ATTG), 97-106 (LGDSSYAKFN), and Asp-132. Positions 188–207 (GSEGQRVAHPGSQEPPSESK) are disordered. In terms of domain architecture, FAD-binding FR-type spans 206–447 (SKPFLAPMIS…VRPGSLAFPE (242 aa)). FAD-binding positions include Arg-350, 382 to 385 (RAFS), and 416 to 419 (GLCS). Residues Thr-460, 515-516 (SR), 521-525 (KVYVQ), and Asp-558 each bind NADP(+). Trp-596 serves as a coordination point for FAD.

The protein belongs to the NADPH-dependent diflavin oxidoreductase NDOR1 family. It in the N-terminal section; belongs to the flavodoxin family. This sequence in the C-terminal section; belongs to the flavoprotein pyridine nucleotide cytochrome reductase family. In terms of assembly, interacts with CIAPIN1; as part of the cytosolic iron-sulfur (Fe-S) protein assembly (CIA) machinery. Interacts with DCPS. FAD serves as cofactor. It depends on FMN as a cofactor. As to expression, low expression in brain, heart, kidney, pancreas, prostate and skeletal muscle. Highest levels in the placenta. Expressed in cancer cell lines including promyelocytic leukemia, HeLaS3, chronic myelagenous leukemia, lymphoblastic leukemia, Burkitt's lymphoma, colorectal adenocarcinoma, lung carcinoma, and melanoma G-361.

The protein localises to the cytoplasm. It localises to the perinuclear region. The enzyme catalyses 2 oxidized [2Fe-2S]-[protein] + NADPH = 2 reduced [2Fe-2S]-[protein] + NADP(+) + H(+). NADPH-dependent reductase which is a central component of the cytosolic iron-sulfur (Fe-S) protein assembly (CIA) machinery. Transfers electrons from NADPH via its FAD and FMN prosthetic groups to the [2Fe-2S] cluster of CIAPIN1, another key component of the CIA machinery. In turn, this reduced cluster provides electrons for assembly of cytosolic iron-sulfur cluster proteins. It can also reduce the [2Fe-2S] cluster of CISD1 and activate this protein implicated in Fe/S cluster repair. In vitro can fully activate methionine synthase/MTR in the presence of soluble cytochrome b5/CYB5A. The chain is NADPH-dependent diflavin oxidoreductase 1 from Homo sapiens (Human).